The following is a 787-amino-acid chain: Glycine-rich domain-containing protein 2 (787 aa).

In terms of tissue distribution, expressed in leaves, inflorescences, buds, flowers and immature siliques.

Involved in development and stress responses, probably through an auxin-dependent mechanism. This chain is Glycine-rich domain-containing protein 2, found in Arabidopsis thaliana (Mouse-ear cress).